The chain runs to 179 residues: Small ribosomal subunit protein uS5 (179 aa).

Residues 13-76 form the S5 DRBM domain; it reads LDERVVLINR…EAAKRNLIRV (64 aa). Residues 160 to 179 are disordered; the sequence is DMTPQELNARRMRRETTEAA.

Belongs to the universal ribosomal protein uS5 family. In terms of assembly, part of the 30S ribosomal subunit. Contacts proteins S4 and S8.

Functionally, with S4 and S12 plays an important role in translational accuracy. Its function is as follows. Located at the back of the 30S subunit body where it stabilizes the conformation of the head with respect to the body. The sequence is that of Small ribosomal subunit protein uS5 from Chloroflexus aggregans (strain MD-66 / DSM 9485).